The following is a 1678-amino-acid chain: Serine/threonine-protein kinase pakD (1678 aa).

Residues 1–15 (MSRLQPQQQQRGRSS) show a composition bias toward low complexity. 4 disordered regions span residues 1-73 (MSRL…NNKF), 180-224 (NSNS…PNKN), 262-428 (QLSS…NNNN), and 442-489 (KRKS…SQSS). Positions 17 to 34 (FKDNFQIQKPLQSLTPSE) are enriched in polar residues. Low complexity-rich tracts occupy residues 35–73 (QQQQQQQQQQQQQQQQQQQQQQQQQNNANNNNNNNNNKF) and 180–214 (NSNSSKTTTNNNNNNNNNNNNNNNNNNNNNNNNNN). The 108-residue stretch at 82-189 (KNVENDIKKW…NSNSSKTTTN (108 aa)) folds into the Calponin-homology (CH) domain. Residues 215-224 (RAIITSPNKN) are compositionally biased toward polar residues. 2 stretches are compositionally biased toward low complexity: residues 276 to 359 (NNNN…NINN) and 399 to 428 (NNNNNNNNNNNNNNNNNNNNNNNNNNNNNN). The span at 460-472 (DSSDSSDSSDSDS) shows a compositional bias: acidic residues. Coiled coils occupy residues 512 to 542 (KQDKTITSQKQTIETLEKDLEFQKQLTKKLL) and 570 to 628 (TRQI…YANT). Low complexity-rich tracts occupy residues 631-654 (SSNSNGNNNSNNNSLGCNNSINGS), 662-671 (NSSTSKGTLS), and 695-713 (NSHQQQQQQNQLSQSQTTS). Disordered regions lie at residues 631 to 672 (SSNS…TLSR) and 693 to 722 (PVNSHQQQQQQNQLSQSQTTSPKNTSASYN). Positions 752-862 (VSATLQQKQQ…QNQQINNLID (111 aa)) form a coiled coil. A Phorbol-ester/DAG-type zinc finger spans residues 1141–1197 (PHSFVLKSFRIISECNYCRQYIWGVRGIVAREAFECVGCKYKTHKKCLKEASEKTFC). Residues 1202-1215 (VGAPFNVKHEMHVG) form the CRIB domain. Disordered regions lie at residues 1267-1292 (LTNNSNNNNNNNNSNNNLQQQQQQNQ) and 1323-1346 (NNTYNNNNNNNNNNEINPSSPNNN). Residues 1269 to 1309 (NNSNNNNNNNNSNNNLQQQQQQNQQLKQKLNITNNQQNNTI) adopt a coiled-coil conformation. The Protein kinase domain maps to 1376–1647 (YKVREVVGGG…AHYLLRHPFL (272 aa)). ATP-binding positions include 1382-1390 (VGGGSTGKV) and K1405. Residue D1515 is the Proton acceptor of the active site.

Belongs to the protein kinase superfamily. STE Ser/Thr protein kinase family. STE20 subfamily. Mg(2+) is required as a cofactor.

The catalysed reaction is L-seryl-[protein] + ATP = O-phospho-L-seryl-[protein] + ADP + H(+). It catalyses the reaction L-threonyl-[protein] + ATP = O-phospho-L-threonyl-[protein] + ADP + H(+). The polypeptide is Serine/threonine-protein kinase pakD (Dictyostelium discoideum (Social amoeba)).